Reading from the N-terminus, the 371-residue chain is Leu/Ile/Val-binding protein homolog 1 (371 aa).

The signal sequence occupies residues 1-23 (MRKTLFSGVALAAVIAFGGSAWA).

This sequence belongs to the leucine-binding protein family.

Component of an amino-acid transport system. The polypeptide is Leu/Ile/Val-binding protein homolog 1 (Brucella melitensis biotype 1 (strain ATCC 23456 / CCUG 17765 / NCTC 10094 / 16M)).